Here is a 202-residue protein sequence, read N- to C-terminus: ATP-dependent Clp protease proteolytic subunit 1 (202 aa).

Ser-102 (nucleophile) is an active-site residue. His-127 is an active-site residue.

It belongs to the peptidase S14 family. As to quaternary structure, fourteen ClpP subunits assemble into 2 heptameric rings which stack back to back to give a disk-like structure with a central cavity, resembling the structure of eukaryotic proteasomes.

It is found in the cytoplasm. The enzyme catalyses Hydrolysis of proteins to small peptides in the presence of ATP and magnesium. alpha-casein is the usual test substrate. In the absence of ATP, only oligopeptides shorter than five residues are hydrolyzed (such as succinyl-Leu-Tyr-|-NHMec, and Leu-Tyr-Leu-|-Tyr-Trp, in which cleavage of the -Tyr-|-Leu- and -Tyr-|-Trp bonds also occurs).. Functionally, cleaves peptides in various proteins in a process that requires ATP hydrolysis. Has a chymotrypsin-like activity. Plays a major role in the degradation of misfolded proteins. The polypeptide is ATP-dependent Clp protease proteolytic subunit 1 (Agrobacterium fabrum (strain C58 / ATCC 33970) (Agrobacterium tumefaciens (strain C58))).